A 279-amino-acid chain; its full sequence is Proline-rich protein 23D1 (279 aa).

Disordered stretches follow at residues 1–60 and 247–270; these read MYGY…PHLN and LRPM…RPPS. The span at 15 to 33 shows a compositional bias: polar residues; it reads TEPQNDNEGETSLATTQMN.

The protein belongs to the PRR23 family.

In Homo sapiens (Human), this protein is Proline-rich protein 23D1 (PRR23D1).